The sequence spans 529 residues: Autoinducer-2 kinase (529 aa).

Belongs to the FGGY kinase family.

The protein resides in the cytoplasm. The enzyme catalyses (S)-4,5-dihydroxypentane-2,3-dione + ATP = (2S)-2-hydroxy-3,4-dioxopentyl phosphate + ADP + H(+). Catalyzes the phosphorylation of autoinducer-2 (AI-2) to phospho-AI-2, which subsequently inactivates the transcriptional regulator LsrR and leads to the transcription of the lsr operon. Phosphorylates the ring-open form of (S)-4,5-dihydroxypentane-2,3-dione (DPD), which is the precursor to all AI-2 signaling molecules, at the C5 position. The chain is Autoinducer-2 kinase from Yersinia enterocolitica serotype O:8 / biotype 1B (strain NCTC 13174 / 8081).